Reading from the N-terminus, the 309-residue chain is Pyridoxal 5'-phosphate synthase subunit PDX1.3 (309 aa).

Methionine 1 is modified (N-acetylmethionine). Aspartate 40 provides a ligand contact to D-ribose 5-phosphate. The active-site Schiff-base intermediate with D-ribose 5-phosphate is the lysine 97. A D-ribose 5-phosphate-binding site is contributed by glycine 169. A D-glyceraldehyde 3-phosphate-binding site is contributed by arginine 181. D-ribose 5-phosphate is bound by residues glycine 230 and 251–252 (GS).

Belongs to the PdxS/SNZ family. As to quaternary structure, homodimer or heterodimer with PDX1.1 or PDX1.2. Interacts with PDX2. In terms of tissue distribution, expressed in cotyledons, rapidly dividing root stele tissues, stems, leaves, flowers, mature pollen, and siliques.

The protein resides in the cytoplasm. Its subcellular location is the cell membrane. The protein localises to the membrane. The catalysed reaction is aldehydo-D-ribose 5-phosphate + D-glyceraldehyde 3-phosphate + L-glutamine = pyridoxal 5'-phosphate + L-glutamate + phosphate + 3 H2O + H(+). Its pathway is cofactor biosynthesis; pyridoxal 5'-phosphate biosynthesis. Catalyzes the formation of pyridoxal 5'-phosphate from ribose 5-phosphate (RBP), glyceraldehyde 3-phosphate (G3P) and ammonia. The ammonia is provided by PDX2. Can also use ribulose 5-phosphate and dihydroxyacetone phosphate as substrates, resulting from enzyme-catalyzed isomerization of RBP and G3P, respectively. Also plays an indirect role in resistance to singlet oxygen-generating photosensitizers. This chain is Pyridoxal 5'-phosphate synthase subunit PDX1.3 (PDX13), found in Arabidopsis thaliana (Mouse-ear cress).